The sequence spans 641 residues: Chaperone protein DnaK (641 aa).

Position 200 is a phosphothreonine; by autocatalysis (threonine 200). Over residues 605–623 (AAEQGGSADAASGNAQASK) the composition is skewed to low complexity. Residues 605–628 (AAEQGGSADAASGNAQASKAADDV) form a disordered region.

This sequence belongs to the heat shock protein 70 family.

Acts as a chaperone. The protein is Chaperone protein DnaK of Xanthomonas oryzae pv. oryzae (strain KACC10331 / KXO85).